Consider the following 329-residue polypeptide: Mo25-like protein (329 aa).

This sequence belongs to the Mo25 family.

This is Mo25-like protein (pmo25) from Schizosaccharomyces pombe (strain 972 / ATCC 24843) (Fission yeast).